The chain runs to 502 residues: Large ribosomal subunit protein uL2m (502 aa).

The disordered stretch occupies residues 458–502 (AMNPVDHPHGGGEGRTKGGRPSVSPWGKPTKAGFRAGVGVGKRRI). Residues 463–473 (DHPHGGGEGRT) show a composition bias toward basic and acidic residues. The segment covering 493–502 (AGVGVGKRRI) has biased composition (gly residues).

This sequence belongs to the universal ribosomal protein uL2 family.

It is found in the mitochondrion. The protein is Large ribosomal subunit protein uL2m (RPL2) of Oryza sativa (Rice).